The primary structure comprises 227 residues: Translation initiation factor 6 (227 aa).

It belongs to the eIF-6 family.

Binds to the 50S ribosomal subunit and prevents its association with the 30S ribosomal subunit to form the 70S initiation complex. The polypeptide is Translation initiation factor 6 (Pyrococcus furiosus (strain ATCC 43587 / DSM 3638 / JCM 8422 / Vc1)).